Consider the following 237-residue polypeptide: uncharacterized protein (237 aa).

One can recognise a GP-PDE domain in the interval glutamine 4–tyrosine 237.

This sequence to glycerophosphoryl diester phosphodiesterases (EC 3.1.4.46). To M.genitalium MG293.

This is an uncharacterized protein from Mycoplasma pneumoniae (strain ATCC 29342 / M129 / Subtype 1) (Mycoplasmoides pneumoniae).